The primary structure comprises 358 residues: WD repeat domain phosphoinositide-interacting protein 4 (358 aa).

2 WD repeats span residues 2–40 (AQQR…EKGH) and 188–228 (AHQS…KLVE). Positions 229 to 232 (LRRG) match the L/FRRG motif motif. The stretch at 233-272 (TDPATLYCINFSHDSSFLCASSDKGTVHIFALKDTKLNRR) is one WD 3 repeat.

This sequence belongs to the WD repeat PROPPIN family.

Its subcellular location is the preautophagosomal structure. In terms of biological role, component of the autophagy machinery that controls the major intracellular degradation process by which cytoplasmic materials are packaged into autophagosomes and delivered to lysosomes for degradation. Binds phosphatidylinositol 3-phosphate (PtdIns3P). This Danio rerio (Zebrafish) protein is WD repeat domain phosphoinositide-interacting protein 4 (wdr45).